Here is a 338-residue protein sequence, read N- to C-terminus: Glutamyl-tRNA reductase (338 aa).

Substrate-binding positions include 50 to 53 (TCHR), Ser-102, 107 to 109 (ETE), and Gln-113. Cys-51 serves as the catalytic Nucleophile. Position 181–186 (181–186 (GYSEIN)) interacts with NADP(+).

It belongs to the glutamyl-tRNA reductase family. In terms of assembly, homodimer.

The catalysed reaction is (S)-4-amino-5-oxopentanoate + tRNA(Glu) + NADP(+) = L-glutamyl-tRNA(Glu) + NADPH + H(+). Its pathway is porphyrin-containing compound metabolism; protoporphyrin-IX biosynthesis; 5-aminolevulinate from L-glutamyl-tRNA(Glu): step 1/2. Its function is as follows. Catalyzes the NADPH-dependent reduction of glutamyl-tRNA(Glu) to glutamate 1-semialdehyde (GSA). The chain is Glutamyl-tRNA reductase from Chlamydia abortus (strain DSM 27085 / S26/3) (Chlamydophila abortus).